Here is a 166-residue protein sequence, read N- to C-terminus: 6,7-dimethyl-8-ribityllumazine synthase (166 aa).

5-amino-6-(D-ribitylamino)uracil contacts are provided by residues Phe-24, 58–60 (ALE), and 82–84 (AVV). Residue 87–88 (ET) coordinates (2S)-2-hydroxy-3-oxobutyl phosphate. His-90 (proton donor) is an active-site residue. Asn-115 is a 5-amino-6-(D-ribitylamino)uracil binding site. Arg-129 is a (2S)-2-hydroxy-3-oxobutyl phosphate binding site.

It belongs to the DMRL synthase family.

It catalyses the reaction (2S)-2-hydroxy-3-oxobutyl phosphate + 5-amino-6-(D-ribitylamino)uracil = 6,7-dimethyl-8-(1-D-ribityl)lumazine + phosphate + 2 H2O + H(+). The protein operates within cofactor biosynthesis; riboflavin biosynthesis; riboflavin from 2-hydroxy-3-oxobutyl phosphate and 5-amino-6-(D-ribitylamino)uracil: step 1/2. In terms of biological role, catalyzes the formation of 6,7-dimethyl-8-ribityllumazine by condensation of 5-amino-6-(D-ribitylamino)uracil with 3,4-dihydroxy-2-butanone 4-phosphate. This is the penultimate step in the biosynthesis of riboflavin. This is 6,7-dimethyl-8-ribityllumazine synthase from Cupriavidus necator (strain ATCC 17699 / DSM 428 / KCTC 22496 / NCIMB 10442 / H16 / Stanier 337) (Ralstonia eutropha).